A 682-amino-acid polypeptide reads, in one-letter code: Potassium-transporting ATPase ATP-binding subunit (682 aa).

4 helical membrane-spanning segments follow: residues 34–54 (PVMFIVWIGSLLTTCISIAMA), 62–82 (ALFSAAISGWLWVTVLFANFA), 219–239 (IALTILLIALTIVFLLATATL), and 254–274 (VLVALLVCLIPTTIGGLLSAI). The 4-aspartylphosphate intermediate role is filled by Asp307. Residues Asp344, Glu348, 377-384 (FTAQSRMS), and Lys395 each bind ATP. Residues Asp518 and Asp522 each coordinate Mg(2+). 3 consecutive transmembrane segments (helical) span residues 588 to 608 (FAIIPAAFAATYPQLNALNIM), 616 to 636 (AILSAVIFNALIIVFLIPLAL), and 662 to 682 (LLVPFIGIKVIDLLLTICGLV).

Belongs to the cation transport ATPase (P-type) (TC 3.A.3) family. Type IA subfamily. The system is composed of three essential subunits: KdpA, KdpB and KdpC.

The protein resides in the cell inner membrane. The enzyme catalyses K(+)(out) + ATP + H2O = K(+)(in) + ADP + phosphate + H(+). In terms of biological role, part of the high-affinity ATP-driven potassium transport (or Kdp) system, which catalyzes the hydrolysis of ATP coupled with the electrogenic transport of potassium into the cytoplasm. This subunit is responsible for energy coupling to the transport system and for the release of the potassium ions to the cytoplasm. In Escherichia coli O81 (strain ED1a), this protein is Potassium-transporting ATPase ATP-binding subunit.